The primary structure comprises 275 residues: Release factor glutamine methyltransferase (275 aa).

S-adenosyl-L-methionine is bound by residues G117–G121, D140, W168, and N182. N182 to Y185 contacts substrate.

It belongs to the protein N5-glutamine methyltransferase family. PrmC subfamily.

The enzyme catalyses L-glutaminyl-[peptide chain release factor] + S-adenosyl-L-methionine = N(5)-methyl-L-glutaminyl-[peptide chain release factor] + S-adenosyl-L-homocysteine + H(+). In terms of biological role, methylates the class 1 translation termination release factors RF1/PrfA and RF2/PrfB on the glutamine residue of the universally conserved GGQ motif. The polypeptide is Release factor glutamine methyltransferase (Buchnera aphidicola subsp. Schizaphis graminum (strain Sg)).